The primary structure comprises 179 residues: NADH-quinone oxidoreductase subunit B (179 aa).

Residues Cys53, Cys54, Cys118, and Cys148 each contribute to the [4Fe-4S] cluster site.

It belongs to the complex I 20 kDa subunit family. As to quaternary structure, NDH-1 is composed of 14 different subunits. Subunits NuoB, C, D, E, F, and G constitute the peripheral sector of the complex. [4Fe-4S] cluster serves as cofactor.

It localises to the cell membrane. It carries out the reaction a quinone + NADH + 5 H(+)(in) = a quinol + NAD(+) + 4 H(+)(out). NDH-1 shuttles electrons from NADH, via FMN and iron-sulfur (Fe-S) centers, to quinones in the respiratory chain. The immediate electron acceptor for the enzyme in this species is believed to be a menaquinone. Couples the redox reaction to proton translocation (for every two electrons transferred, four hydrogen ions are translocated across the cytoplasmic membrane), and thus conserves the redox energy in a proton gradient. The chain is NADH-quinone oxidoreductase subunit B from Bacillus thuringiensis (strain Al Hakam).